The primary structure comprises 251 residues: 3-deoxy-manno-octulosonate cytidylyltransferase (251 aa).

This sequence belongs to the KdsB family.

Its subcellular location is the cytoplasm. It catalyses the reaction 3-deoxy-alpha-D-manno-oct-2-ulosonate + CTP = CMP-3-deoxy-beta-D-manno-octulosonate + diphosphate. Its pathway is nucleotide-sugar biosynthesis; CMP-3-deoxy-D-manno-octulosonate biosynthesis; CMP-3-deoxy-D-manno-octulosonate from 3-deoxy-D-manno-octulosonate and CTP: step 1/1. It participates in bacterial outer membrane biogenesis; lipopolysaccharide biosynthesis. Its function is as follows. Activates KDO (a required 8-carbon sugar) for incorporation into bacterial lipopolysaccharide in Gram-negative bacteria. This Brucella ovis (strain ATCC 25840 / 63/290 / NCTC 10512) protein is 3-deoxy-manno-octulosonate cytidylyltransferase.